Reading from the N-terminus, the 187-residue chain is Transmembrane protein 212 (187 aa).

Helical transmembrane passes span 11–31 (TLVTLGGLSIFSGAIAFFPVF), 42–62 (VWIACPIWNGALAVTAGSLVL), 76–96 (AVFTFVILSILGCPLHFTVAL), 106–126 (FYSFSGVAGTNYLGYVVTFPF), and 148–168 (LQVLDLCLSLILFCVSLAVFI).

Its subcellular location is the membrane. The sequence is that of Transmembrane protein 212 (Tmem212) from Mus musculus (Mouse).